Reading from the N-terminus, the 1127-residue chain is Ras guanine nucleotide exchange factor F (1127 aa).

2 disordered regions span residues 1–82 and 96–154; these read MTDK…SLLN and NSGG…SSSS. Low complexity-rich tracts occupy residues 23–53 and 67–82; these read NQPSPSTSTPASPNVNSTNNSPSVSPATTSP and NNNNNTNIPHQTSLLN. The span at 122–132 shows a compositional bias: polar residues; the sequence is RTSTTLAQFSG. A compositionally biased stretch (low complexity) spans 133–154; sequence SSLPNTENSSPPPSSSLISSSS. Kelch repeat units follow at residues 212-261, 262-311, 313-366, 367-418, and 420-469; these read GFYL…LYNN, SMYI…VESG, MIVF…MHKG, NMYV…LFQD, and IFIS…VKGN. The region spanning 557–589 is the LisH domain; it reads SHQFVLQLIMEYLERNTYHKVIAAIQKESGVLH. The N-terminal Ras-GEF domain maps to 673–804; sequence NKVQIKAATF…KLRELKKKLQ (132 aa). One can recognise a Ras-GEF domain in the interval 835 to 1062; the sequence is DELEIARQMT…YDLNLLSESL (228 aa). The segment at 1090–1127 is disordered; sequence LGSARELNNSNRDSNNITGSSSNNNSNSSNSLSPIVKL. The span at 1103 to 1127 shows a compositional bias: low complexity; that stretch reads SNNITGSSSNNNSNSSNSLSPIVKL.

In terms of biological role, promotes the exchange of Ras-bound GDP by GTP. The chain is Ras guanine nucleotide exchange factor F (gefF) from Dictyostelium discoideum (Social amoeba).